The primary structure comprises 126 residues: Muscarinic acetylcholine receptor M4 (126 aa).

The disordered stretch occupies residues 1-90; that stretch reads MKQSVKKPPP…LQPRTLNPAS (90 aa). The Cytoplasmic segment spans residues 1–126; the sequence is MKQSVKKPPP…PAGMRPAANV (126 aa). A compositionally biased stretch (pro residues) spans 28–39; that stretch reads APPPVLPPPPRP. A compositionally biased stretch (polar residues) spans 47 to 57; the sequence is NESSSGSATQN. The span at 64-75 shows a compositional bias: low complexity; the sequence is TELSTTEATTPA.

This sequence belongs to the G-protein coupled receptor 1 family. Muscarinic acetylcholine receptor subfamily. CHRM4 sub-subfamily.

The protein resides in the cell membrane. It is found in the postsynaptic cell membrane. Functionally, the muscarinic acetylcholine receptor mediates various cellular responses, including inhibition of adenylate cyclase, breakdown of phosphoinositides and modulation of potassium channels through the action of G proteins. Primary transducing effect is inhibition of adenylate cyclase. May couple to multiple functional responses in cell lines. The polypeptide is Muscarinic acetylcholine receptor M4 (CHRM4) (Bos taurus (Bovine)).